Reading from the N-terminus, the 312-residue chain is MKFEHRSVMPREVRDGLDLKPGETCVDCTLGGSGHAVTSLAAVLPNGRLIGIDQDLDAIENAHRVFADDMANVSIFHDNFSHLPAILDSLGIKGVDGILLDLGLSLHQLRKGQRGFSFKGDEPLDMRMDMRTALTAADLVNTLEERALVDIFFKYGEEKMSRKIARAIVRQRASAPITRNCELAEIVRAAIPAKIVHQQKIHPATRVFQALRISVNRELEQLERFLETFVDFLNPGGRICIISFHSLEDRMVKRRFRALEQGCTCPRDFPECVCGFKPRLKSVTKRAVMPTPEEIEINPMARSARLRVAWRV.

S-adenosyl-L-methionine contacts are provided by residues 33–35, aspartate 53, phenylalanine 80, aspartate 101, and glutamine 108; that span reads SGH.

This sequence belongs to the methyltransferase superfamily. RsmH family.

The protein localises to the cytoplasm. The catalysed reaction is cytidine(1402) in 16S rRNA + S-adenosyl-L-methionine = N(4)-methylcytidine(1402) in 16S rRNA + S-adenosyl-L-homocysteine + H(+). Its function is as follows. Specifically methylates the N4 position of cytidine in position 1402 (C1402) of 16S rRNA. The polypeptide is Ribosomal RNA small subunit methyltransferase H (Desulforapulum autotrophicum (strain ATCC 43914 / DSM 3382 / VKM B-1955 / HRM2) (Desulfobacterium autotrophicum)).